We begin with the raw amino-acid sequence, 127 residues long: Aspartate 1-decarboxylase (127 aa).

Catalysis depends on Ser25, which acts as the Schiff-base intermediate with substrate; via pyruvic acid. Residue Ser25 is modified to Pyruvic acid (Ser). Thr57 serves as a coordination point for substrate. The Proton donor role is filled by Tyr58. A substrate-binding site is contributed by 73 to 75 (GAA).

The protein belongs to the PanD family. Heterooctamer of four alpha and four beta subunits. Pyruvate is required as a cofactor. Is synthesized initially as an inactive proenzyme, which is activated by self-cleavage at a specific serine bond to produce a beta-subunit with a hydroxyl group at its C-terminus and an alpha-subunit with a pyruvoyl group at its N-terminus.

It localises to the cytoplasm. The enzyme catalyses L-aspartate + H(+) = beta-alanine + CO2. It participates in cofactor biosynthesis; (R)-pantothenate biosynthesis; beta-alanine from L-aspartate: step 1/1. Functionally, catalyzes the pyruvoyl-dependent decarboxylation of aspartate to produce beta-alanine. The chain is Aspartate 1-decarboxylase from Halalkalibacterium halodurans (strain ATCC BAA-125 / DSM 18197 / FERM 7344 / JCM 9153 / C-125) (Bacillus halodurans).